The sequence spans 249 residues: ATP-dependent Clp protease proteolytic subunit (249 aa).

Residue serine 107 is the Nucleophile of the active site. Histidine 132 is a catalytic residue. Residues 212-249 (ESASQDNSLDPDAPDESASQDNSLDPDAPDETRPPKLR) are disordered.

The protein belongs to the peptidase S14 family. In terms of assembly, component of the chloroplastic Clp protease core complex.

Its subcellular location is the plastid. The protein resides in the chloroplast stroma. The enzyme catalyses Hydrolysis of proteins to small peptides in the presence of ATP and magnesium. alpha-casein is the usual test substrate. In the absence of ATP, only oligopeptides shorter than five residues are hydrolyzed (such as succinyl-Leu-Tyr-|-NHMec, and Leu-Tyr-Leu-|-Tyr-Trp, in which cleavage of the -Tyr-|-Leu- and -Tyr-|-Trp bonds also occurs).. In terms of biological role, cleaves peptides in various proteins in a process that requires ATP hydrolysis. Has a chymotrypsin-like activity. Plays a major role in the degradation of misfolded proteins. The polypeptide is ATP-dependent Clp protease proteolytic subunit (Oenothera elata subsp. hookeri (Hooker's evening primrose)).